Here is a 467-residue protein sequence, read N- to C-terminus: Glutamate--tRNA ligase (467 aa).

The 'HIGH' region motif lies at 9-19 (PSPTGYLHIGG). The short motif at 237–241 (KLSKR) is the 'KMSKS' region element. Lysine 240 provides a ligand contact to ATP.

This sequence belongs to the class-I aminoacyl-tRNA synthetase family. Glutamate--tRNA ligase type 1 subfamily. As to quaternary structure, monomer.

Its subcellular location is the cytoplasm. The catalysed reaction is tRNA(Glu) + L-glutamate + ATP = L-glutamyl-tRNA(Glu) + AMP + diphosphate. In terms of biological role, catalyzes the attachment of glutamate to tRNA(Glu) in a two-step reaction: glutamate is first activated by ATP to form Glu-AMP and then transferred to the acceptor end of tRNA(Glu). In Xylella fastidiosa (strain M23), this protein is Glutamate--tRNA ligase.